The sequence spans 185 residues: Elongation factor P (185 aa).

This sequence belongs to the elongation factor P family.

Its subcellular location is the cytoplasm. Its pathway is protein biosynthesis; polypeptide chain elongation. In terms of biological role, involved in peptide bond synthesis. Stimulates efficient translation and peptide-bond synthesis on native or reconstituted 70S ribosomes in vitro. Probably functions indirectly by altering the affinity of the ribosome for aminoacyl-tRNA, thus increasing their reactivity as acceptors for peptidyl transferase. This Mesomycoplasma hyopneumoniae (strain J / ATCC 25934 / NCTC 10110) (Mycoplasma hyopneumoniae) protein is Elongation factor P.